The primary structure comprises 272 residues: Acetyl-coenzyme A carboxylase carboxyl transferase subunit alpha (272 aa).

Residues 1–248 (MDKDFMKINV…KKTIVDSLLE (248 aa)) form the CoA carboxyltransferase C-terminal domain.

The protein belongs to the AccA family. In terms of assembly, acetyl-CoA carboxylase is a heterohexamer composed of biotin carboxyl carrier protein (AccB), biotin carboxylase (AccC) and two subunits each of ACCase subunit alpha (AccA) and ACCase subunit beta (AccD).

It localises to the cytoplasm. The catalysed reaction is N(6)-carboxybiotinyl-L-lysyl-[protein] + acetyl-CoA = N(6)-biotinyl-L-lysyl-[protein] + malonyl-CoA. Its pathway is lipid metabolism; malonyl-CoA biosynthesis; malonyl-CoA from acetyl-CoA: step 1/1. Its function is as follows. Component of the acetyl coenzyme A carboxylase (ACC) complex. First, biotin carboxylase catalyzes the carboxylation of biotin on its carrier protein (BCCP) and then the CO(2) group is transferred by the carboxyltransferase to acetyl-CoA to form malonyl-CoA. The protein is Acetyl-coenzyme A carboxylase carboxyl transferase subunit alpha of Clostridium beijerinckii (strain ATCC 51743 / NCIMB 8052) (Clostridium acetobutylicum).